Reading from the N-terminus, the 237-residue chain is Protein CUSTOS (237 aa).

Disordered regions lie at residues 1 to 23, 50 to 69, and 97 to 237; these read MAAP…LDRF, LRVR…TTPE, and ISKA…LGNE. The span at 52-62 shows a compositional bias: basic and acidic residues; the sequence is VRPDCHEHDGN. The span at 162–177 shows a compositional bias: polar residues; sequence STLQQEPQSTPSNVCD. The segment covering 181 to 190 has biased composition (basic residues); that stretch reads PKKKRKKKKK. The Nucleolar localization signal (NLS1) motif lies at 182–190; sequence KKKRKKKKK. Composition is skewed to basic and acidic residues over residues 203-216 and 225-237; these read ETMH…ELQA and KLEM…LGNE. Residues 217 to 225 carry the Nucleolar localization signal (NLS2) motif; the sequence is KRKKKKKQK.

Belongs to the CUSTOS family. As to quaternary structure, interacts (via NLS1 and NLS2) with dvl2; the interaction is negatively regulated by Wnt stimulation. Interacts with csnk1a1. Interacts with ctnnb1; the interaction is positively regulated by Wnt stimulation. Post-translationally, phosphorylated by ck1/csnk1a1.

The protein localises to the nucleus envelope. Functionally, essential for Spemann-Mangold organizer formation and subsequent anterior head development in the embryo. Inhibits canonical Wnt signaling pathway by antagonizing nuclear import of beta-catenin (ctnnb1) during embryogenesis. This Xenopus laevis (African clawed frog) protein is Protein CUSTOS.